We begin with the raw amino-acid sequence, 223 residues long: Putative 3-methyladenine DNA glycosylase (223 aa).

The protein belongs to the DNA glycosylase MPG family.

This is Putative 3-methyladenine DNA glycosylase from Rickettsia typhi (strain ATCC VR-144 / Wilmington).